Consider the following 1121-residue polypeptide: Pleckstrin homology domain-containing family A member 7 (1121 aa).

WW domains follow at residues 9–42 and 54–87; these read DTLP…HPRT and SDLP…HPVT. The disordered stretch occupies residues 105 to 137; that stretch reads PHMSKQDRNQRPSSMVSETSTAGTASTLEAKPG. Residues 115-131 show a composition bias toward polar residues; sequence RPSSMVSETSTAGTAST. The 119-residue stretch at 164–282 folds into the PH domain; it reads PVVVRGWLHK…WVRAMNQAAQ (119 aa). The interval 299–514 is disordered; it reads QAVPQANHTE…LKMSSEERRA (216 aa). Composition is skewed to basic and acidic residues over residues 308–356 and 437–446; these read ESCH…EGKR and HWARAQKGDS. Polar residues predominate over residues 460–475; the sequence is PGQSLSFPENYQTLPK. The segment covering 497 to 514 has biased composition (basic and acidic residues); sequence YAQDRASHLKMSSEERRA. A phosphoserine mark is found at Ser-536, Ser-545, Ser-569, Ser-604, Ser-608, and Ser-612. The interaction with CTNND1 stretch occupies residues 538–696; sequence TAPICLGSPE…AESDTDVKLS (159 aa). The interval 547–632 is disordered; the sequence is EFTDQGRSRS…NSSHVDRRSM (86 aa). A compositionally biased stretch (pro residues) spans 567–582; the sequence is PPSPSDIPPPGPPRVF. Over residues 589–605 the composition is skewed to basic and acidic residues; that stretch reads TPAERVTVKPPDQRRSV. Positions 700–801 form a coiled coil; the sequence is EQDRVLQDLE…LQEQHRRAFF (102 aa). 2 disordered regions span residues 841–876 and 888–971; these read RKTV…VRTP and YVPY…ELGQ. Residues Ser-858, Ser-860, and Ser-867 each carry the phosphoserine modification. Residues 861 to 871 show a composition bias toward pro residues; that stretch reads KPPPQPSPPTS. At Thr-870 the chain carries Phosphothreonine. Ser-871, Ser-903, and Ser-907 each carry phosphoserine. The segment covering 933–942 has biased composition (pro residues); that stretch reads DQPPAVPPLP. The segment covering 958-969 has biased composition (basic and acidic residues); it reads RQSDERKRDREL. Ser-986 bears the Phosphoserine mark. Disordered stretches follow at residues 1003-1028 and 1082-1121; these read GLVG…RLQQ and RHQK…GSVC. Residues 1067-1094 are a coiled coil; sequence QRGKMSAEEQLERMKRHQKALVRERKRT. Positions 1082-1094 are enriched in basic residues; it reads RHQKALVRERKRT.

In terms of assembly, interacts with CAMSAP3 and CTNND1. Interacts (via WW domains) with TSPAN33 (via cytoplasmic domain) and with PDZD11; the interaction with TSPAN33 is dependent on PDZD11 being bound to PLEKHA7 and facilitates the docking of ADAM10 to zonula adherens through interaction of TSPAN33 with ADAM10.

It localises to the cell junction. It is found in the adherens junction. The protein resides in the cytoplasm. The protein localises to the cytoskeleton. Its subcellular location is the microtubule organizing center. It localises to the centrosome. Required for zonula adherens biogenesis and maintenance. Acts via its interaction with CAMSAP3, which anchors microtubules at their minus-ends to zonula adherens, leading to the recruitment of KIFC3 kinesin to the junctional site. Mediates docking of ADAM10 to zonula adherens through a PDZD11-dependent interaction with the ADAM10-binding protein TSPAN33. The sequence is that of Pleckstrin homology domain-containing family A member 7 (PLEKHA7) from Homo sapiens (Human).